Consider the following 60-residue polypeptide: Protein translocase subunit SecE (60 aa).

Residues 31–51 (VIVVSTVIFFLVFFYALDLGI) traverse the membrane as a helical segment.

The protein belongs to the SecE/SEC61-gamma family. As to quaternary structure, component of the Sec protein translocase complex. Heterotrimer consisting of SecY, SecE and SecG subunits. The heterotrimers can form oligomers, although 1 heterotrimer is thought to be able to translocate proteins. Interacts with the ribosome. Interacts with SecDF, and other proteins may be involved. Interacts with SecA.

It is found in the cell membrane. Functionally, essential subunit of the Sec protein translocation channel SecYEG. Clamps together the 2 halves of SecY. May contact the channel plug during translocation. This chain is Protein translocase subunit SecE, found in Staphylococcus aureus (strain Mu50 / ATCC 700699).